Here is a 423-residue protein sequence, read N- to C-terminus: Serine hydroxymethyltransferase (423 aa).

Residues Leu-120 and Gly-124–Leu-126 each bind (6S)-5,6,7,8-tetrahydrofolate. At Lys-229 the chain carries N6-(pyridoxal phosphate)lysine. Ser-353–Phe-355 is a (6S)-5,6,7,8-tetrahydrofolate binding site.

The protein belongs to the SHMT family. As to quaternary structure, homodimer. The cofactor is pyridoxal 5'-phosphate.

Its subcellular location is the cytoplasm. It carries out the reaction (6R)-5,10-methylene-5,6,7,8-tetrahydrofolate + glycine + H2O = (6S)-5,6,7,8-tetrahydrofolate + L-serine. Its pathway is one-carbon metabolism; tetrahydrofolate interconversion. It functions in the pathway amino-acid biosynthesis; glycine biosynthesis; glycine from L-serine: step 1/1. Functionally, catalyzes the reversible interconversion of serine and glycine with tetrahydrofolate (THF) serving as the one-carbon carrier. This reaction serves as the major source of one-carbon groups required for the biosynthesis of purines, thymidylate, methionine, and other important biomolecules. Also exhibits THF-independent aldolase activity toward beta-hydroxyamino acids, producing glycine and aldehydes, via a retro-aldol mechanism. In Prochlorococcus marinus (strain MIT 9515), this protein is Serine hydroxymethyltransferase.